Reading from the N-terminus, the 433-residue chain is 23S rRNA (uracil(1939)-C(5))-methyltransferase RlmD (433 aa).

In terms of domain architecture, TRAM spans 10 to 68; the sequence is RTTTRQIITVSVNDLDSFGQGVARHNGKTLFIPGLLPQENAEVAVTEDKKQYARAKVVR. Cysteine 81, cysteine 87, cysteine 90, and cysteine 162 together coordinate [4Fe-4S] cluster. S-adenosyl-L-methionine is bound by residues glutamine 265, phenylalanine 294, asparagine 299, glutamate 315, asparagine 342, and aspartate 363. The Nucleophile role is filled by cysteine 389.

It belongs to the class I-like SAM-binding methyltransferase superfamily. RNA M5U methyltransferase family. RlmD subfamily.

It catalyses the reaction uridine(1939) in 23S rRNA + S-adenosyl-L-methionine = 5-methyluridine(1939) in 23S rRNA + S-adenosyl-L-homocysteine + H(+). In terms of biological role, catalyzes the formation of 5-methyl-uridine at position 1939 (m5U1939) in 23S rRNA. The polypeptide is 23S rRNA (uracil(1939)-C(5))-methyltransferase RlmD (Shigella flexneri).